Reading from the N-terminus, the 829-residue chain is MRRSFYASSTENTPMMMTQARVLSTGTTDNGTIRYDEVDETKRWFNRRFCFLTVIGIAVLLLAMVVIVVIVLLLTQLKAANSNAQNAMSSSKVQLEELTRKLSQPLEQLGPTLERLSNMPGFPMGPSPTTQTPPGVPPISPIVTGPNTTPESPRRSPKARYEWKGCQNLGKCELSGYTKPPLVILSLDGFAREYVDRNIVQTLNHIADCGVKADKVYPSYPSKTFPNHYSIVTGLWPESHGITDNSVFDPTISPVLESMKSTKYEKFFEGEPIWSVYKRKTGKKANCLFWVGCAYNNSGYAPDVAPAYNQELPFRNRIDTVVEWLKLPVDERPGLITAYLHEPDNAGHYQVDEEDVDEKLAEIDENLDYLMSRLSEEKLLECINFAILSDHGMQLIDKTYYFQDYLDLKGLITAKGVVGRVYINDTTISVNDVVDKFRCKIDTVKTNTRSDVPTRKHYSRDPRVGEVLLEGRAGVTFYKSKADDYELSGDHGYDYFNPKMHTIFYARGPSFKQNTTISPYQNIQYMNLWMNLLGIEGAVETNGTIGFFDNILTNPPRRDNPTNVIGECPMIAFPSVLKCSGNVSAETLNQLSVKLTNCAFSPTNIPLYSDNHCFQNYCDNSVIVSRKGNDARRAIIEVLSRDEASNPSNFTFLNAKYQSNCPSHIPTGSLTIRQNSQLSSMVDERIDVPNNFLLKVLDPLQAKSMEYLNKFGKMYVISGTATDINHDGIADSNGSVITHIYRIMLICNSTWLLMNPPLCTDSDSMDTLSFIFPITEQSTIDCMSSDDILLDYTATIFDVERISGFQFGIGALSQNQNTIIRRKISTKLW.

A helical; Signal-anchor for type II membrane protein transmembrane segment spans residues 54 to 74; the sequence is VIGIAVLLLAMVVIVVIVLLL. Thr-224 (nucleophile) is an active-site residue. 8 N-linked (GlcNAc...) asparagine glycosylation sites follow: Asn-296, Asn-424, Asn-514, Asn-542, Asn-582, Asn-649, Asn-733, and Asn-748. Cys-439 and Cys-782 form a disulfide bridge.

The protein belongs to the nucleotide pyrophosphatase/phosphodiesterase family.

It localises to the membrane. Its function is as follows. Probable phosphodiesterase. This chain is Ectonucleotide pyrophosphatase/phosphodiesterase C27A7.1, found in Caenorhabditis elegans.